A 60-amino-acid polypeptide reads, in one-letter code: Large ribosomal subunit protein bL32 (60 aa).

A disordered region spans residues 1 to 44; that stretch reads MAVQQNKKSRSARDMRRSHDALSENALSVEKTTGEVHLRHHVSP. A compositionally biased stretch (basic and acidic residues) spans 11 to 22; sequence SARDMRRSHDAL.

It belongs to the bacterial ribosomal protein bL32 family.

This is Large ribosomal subunit protein bL32 from Pseudomonas putida (strain W619).